The chain runs to 293 residues: tRNA pseudouridine synthase B (293 aa).

Aspartate 39 functions as the Nucleophile in the catalytic mechanism.

This sequence belongs to the pseudouridine synthase TruB family. Type 1 subfamily.

The enzyme catalyses uridine(55) in tRNA = pseudouridine(55) in tRNA. Responsible for synthesis of pseudouridine from uracil-55 in the psi GC loop of transfer RNAs. In Streptococcus thermophilus (strain ATCC BAA-250 / LMG 18311), this protein is tRNA pseudouridine synthase B.